A 1160-amino-acid polypeptide reads, in one-letter code: Protein GIGANTEA (1160 aa).

Polar residues predominate over residues 158–169 (CSSTSDQASSCE). Disordered stretches follow at residues 158 to 188 (CSSTSDQASSCESMEKRANGSPRNEPDRKPL), 600 to 629 (GGSKRPTGSDNHSSEEVTNDSRLTNGRNRC), and 800 to 830 (PVKKDEPPIEEKNINSSDGGALEKKDASRSH). Residues 170-187 (SMEKRANGSPRNEPDRKP) show a composition bias toward basic and acidic residues. Residues 801 to 812 (VKKDEPPIEEKN) show a composition bias toward basic and acidic residues.

Belongs to the GIGANTEA family.

The protein resides in the nucleus. Its function is as follows. Involved in regulation of circadian rhythm, and in the control of the photoperiodic flowering. Acts as a suppressor of flowering under short-day (SD) and long-day (LD) conditions. Activates Hd1/CONSTANS gene. The polypeptide is Protein GIGANTEA (GI) (Oryza sativa subsp. japonica (Rice)).